We begin with the raw amino-acid sequence, 407 residues long: Argininosuccinate synthase (407 aa).

ATP contacts are provided by residues 16 to 24 (AYSGGLDTS) and Ala44. Residues Tyr96 and Ser101 each coordinate L-citrulline. Gly126 provides a ligand contact to ATP. L-aspartate contacts are provided by Thr128, Asn132, and Asp133. Asn132 serves as a coordination point for L-citrulline. L-citrulline contacts are provided by Arg136, Ser185, Ser194, Glu270, and Tyr282.

Belongs to the argininosuccinate synthase family. Type 1 subfamily. As to quaternary structure, homotetramer.

The protein localises to the cytoplasm. It catalyses the reaction L-citrulline + L-aspartate + ATP = 2-(N(omega)-L-arginino)succinate + AMP + diphosphate + H(+). The protein operates within amino-acid biosynthesis; L-arginine biosynthesis; L-arginine from L-ornithine and carbamoyl phosphate: step 2/3. The protein is Argininosuccinate synthase of Shewanella denitrificans (strain OS217 / ATCC BAA-1090 / DSM 15013).